The following is a 361-amino-acid chain: Putative geranylgeranyl pyrophosphate synthase 8, chloroplastic (361 aa).

A chloroplast-targeting transit peptide spans 1–39; sequence MATTVHLSSFSLFIQSRGRRDNSISSVKSLKKRTGLSPS. Residues 24–58 are disordered; it reads ISSVKSLKKRTGLSPSSALTSQGGRDMIPPQGKSN. Positions 36–46 are enriched in polar residues; the sequence is LSPSSALTSQG. Isopentenyl diphosphate contacts are provided by K107, R110, and H139. D146 and D152 together coordinate Mg(2+). R157 is a binding site for dimethylallyl diphosphate. Residue R158 participates in isopentenyl diphosphate binding. Dimethylallyl diphosphate-binding residues include K246, T247, Q284, K301, and K311.

This sequence belongs to the FPP/GGPP synthase family. Monomer. Requires Mg(2+) as cofactor.

Its subcellular location is the plastid. It is found in the chloroplast. It carries out the reaction isopentenyl diphosphate + dimethylallyl diphosphate = (2E)-geranyl diphosphate + diphosphate. It catalyses the reaction isopentenyl diphosphate + (2E)-geranyl diphosphate = (2E,6E)-farnesyl diphosphate + diphosphate. The catalysed reaction is isopentenyl diphosphate + (2E,6E)-farnesyl diphosphate = (2E,6E,10E)-geranylgeranyl diphosphate + diphosphate. Its pathway is isoprenoid biosynthesis; farnesyl diphosphate biosynthesis; farnesyl diphosphate from geranyl diphosphate and isopentenyl diphosphate: step 1/1. It functions in the pathway isoprenoid biosynthesis; geranyl diphosphate biosynthesis; geranyl diphosphate from dimethylallyl diphosphate and isopentenyl diphosphate: step 1/1. The protein operates within isoprenoid biosynthesis; geranylgeranyl diphosphate biosynthesis; geranylgeranyl diphosphate from farnesyl diphosphate and isopentenyl diphosphate: step 1/1. In terms of biological role, catalyzes the trans-addition of the three molecules of IPP onto DMAPP to form geranylgeranyl pyrophosphate. The protein is Putative geranylgeranyl pyrophosphate synthase 8, chloroplastic of Arabidopsis thaliana (Mouse-ear cress).